Reading from the N-terminus, the 113-residue chain is MNRLDFVDKPSLRDDIPAFNPGDTINVHVKVIEGAKERLQVFKGVVIRRQGGGIRETFTVRKESYGVGVERTFPVHSPNIDHIEVVTRGDVRRAKLYYLRELRGKKAKIKEKR.

It belongs to the bacterial ribosomal protein bL19 family.

This protein is located at the 30S-50S ribosomal subunit interface and may play a role in the structure and function of the aminoacyl-tRNA binding site. The polypeptide is Large ribosomal subunit protein bL19 (rplS) (Mycobacterium bovis (strain ATCC BAA-935 / AF2122/97)).